The sequence spans 596 residues: Leucine zipper putative tumor suppressor 1 (596 aa).

A lipid anchor (N-myristoyl glycine) is attached at Gly2. 2 disordered regions span residues 136-193 (AILH…SYQL) and 295-324 (YEER…SQKS). The segment covering 153 to 162 (PPDKPKEQEL) has biased composition (basic and acidic residues). Low complexity predominate over residues 178–190 (SMSSLPTHSTSSS). A coiled-coil region spans residues 256–374 (ISTDECSIQE…SYEREKTSFG (119 aa)). Basic and acidic residues predominate over residues 295–310 (YEERPRRCRDELEGPE).

Belongs to the LZTS family. As to quaternary structure, binds EEF1G, TLK2 and CDK1. Post-translationally, phosphorylated on serine residues. Hyperphosphorylated by the cAMP-dependent kinase PKA during cell-cycle progression. In terms of tissue distribution, highly expressed in testis, prostate, spleen, thymus, ovary and brain. Detected at lower levels in heart, placenta, small intestine, colon, liver, kidney, skeletal muscle and pancreas. Not detectable in primary tumors from breast and prostate and in many cancer cell lines.

It localises to the cytoplasm. Its subcellular location is the cell membrane. The protein resides in the cell projection. The protein localises to the dendritic spine. It is found in the postsynaptic density. It localises to the synapse. In terms of biological role, involved in the regulation of cell growth. May stabilize the active CDC2-cyclin B1 complex and thereby contribute to the regulation of the cell cycle and the prevention of uncontrolled cell proliferation. May act as a tumor suppressor. The sequence is that of Leucine zipper putative tumor suppressor 1 (LZTS1) from Homo sapiens (Human).